The following is a 126-amino-acid chain: Histone H2B type 1-B (126 aa).

Residues 1 to 12 (MPEPSKSAPAPK) show a composition bias toward low complexity. The disordered stretch occupies residues 1-35 (MPEPSKSAPAPKKGSKKAITKAQKKDGKKRKRSRK). P2 carries the post-translational modification N-acetylproline. E3 is modified (ADP-ribosyl glutamic acid). The residue at position 6 (K6) is an N6-(2-hydroxyisobutyryl)lysine; alternate. At K6 the chain carries N6-(beta-hydroxybutyryl)lysine; alternate. K6 bears the N6-acetyllysine; alternate mark. At K6 the chain carries N6-butyryllysine; alternate. K6 is subject to N6-crotonyllysine; alternate. K6 is subject to N6-lactoyllysine; alternate. K6 participates in a covalent cross-link: Glycyl lysine isopeptide (Lys-Gly) (interchain with G-Cter in SUMO2); alternate. The residue at position 7 (S7) is an ADP-ribosylserine. Position 12 is an N6-(beta-hydroxybutyryl)lysine; alternate (K12). N6-acetyllysine; alternate is present on residues K12 and K13. N6-crotonyllysine; alternate occurs at positions 12 and 13. The residue at position 12 (K12) is an N6-lactoyllysine; alternate. K13 carries the post-translational modification N6-(2-hydroxyisobutyryl)lysine; alternate. Residue S15 is modified to Phosphoserine; by STK4/MST1. K16, K17, K21, and K24 each carry N6-acetyllysine; alternate. N6-crotonyllysine; alternate occurs at positions 16, 17, 21, and 24. N6-lactoyllysine; alternate occurs at positions 16, 17, 21, and 24. 2 positions are modified to N6-(beta-hydroxybutyryl)lysine; alternate: K17 and K21. K17 is subject to N6-glutaryllysine; alternate. N6-(2-hydroxyisobutyryl)lysine; alternate is present on residues K21 and K24. Residue K21 is modified to N6-butyryllysine; alternate. A Glycyl lysine isopeptide (Lys-Gly) (interchain with G-Cter in SUMO2); alternate cross-link involves residue K21. K25 carries the N6-(2-hydroxyisobutyryl)lysine modification. K35 bears the N6-(2-hydroxyisobutyryl)lysine; alternate mark. Residue K35 is modified to N6-(beta-hydroxybutyryl)lysine; alternate. K35 carries the post-translational modification N6-crotonyllysine; alternate. An N6-glutaryllysine; alternate modification is found at K35. N6-succinyllysine; alternate is present on K35. Residue K35 forms a Glycyl lysine isopeptide (Lys-Gly) (interchain with G-Cter in ubiquitin); alternate linkage. PolyADP-ribosyl glutamic acid is present on E36. S37 carries the post-translational modification Phosphoserine; by AMPK. N6-(2-hydroxyisobutyryl)lysine; alternate is present on residues K44, K47, and K58. An N6-lactoyllysine; alternate modification is found at K44. Residues K44 and K47 each carry the N6-glutaryllysine; alternate modification. K47 is modified (N6-methyllysine; alternate). K58 is subject to N6,N6-dimethyllysine; alternate. Dimethylated arginine is present on R80. K86 carries the N6-(2-hydroxyisobutyryl)lysine; alternate modification. K86 is subject to N6-(beta-hydroxybutyryl)lysine; alternate. K86 is modified (N6-acetyllysine; alternate). Residue K86 is modified to N6-lactoyllysine; alternate. N6,N6,N6-trimethyllysine; alternate is present on K86. Omega-N-methylarginine is present on residues R87 and R93. K109 is subject to N6-(2-hydroxyisobutyryl)lysine; alternate. K109 carries the N6-lactoyllysine; alternate modification. The residue at position 109 (K109) is an N6-glutaryllysine; alternate. N6-methyllysine; alternate is present on K109. The O-linked (GlcNAc) serine glycan is linked to S113. The residue at position 116 (T116) is a Phosphothreonine. 2 positions are modified to N6-(2-hydroxyisobutyryl)lysine; alternate: K117 and K121. K117 and K121 each carry N6-(beta-hydroxybutyryl)lysine; alternate. N6-lactoyllysine; alternate occurs at positions 117 and 121. 2 positions are modified to N6-glutaryllysine; alternate: K117 and K121. Residues K117 and K121 each carry the N6-succinyllysine; alternate modification. K117 bears the N6-malonyllysine; alternate mark. K117 is modified (N6-methylated lysine; alternate). K121 is covalently cross-linked (Glycyl lysine isopeptide (Lys-Gly) (interchain with G-Cter in ubiquitin); alternate).

Belongs to the histone H2B family. As to quaternary structure, the nucleosome is a histone octamer containing two molecules each of H2A, H2B, H3 and H4 assembled in one H3-H4 heterotetramer and two H2A-H2B heterodimers. The octamer wraps approximately 147 bp of DNA. Post-translationally, monoubiquitination at Lys-35 (H2BK34Ub) by the MSL1/MSL2 dimer is required for histone H3 'Lys-4' (H3K4me) and 'Lys-79' (H3K79me) methylation and transcription activation at specific gene loci, such as HOXA9 and MEIS1 loci. Similarly, monoubiquitination at Lys-121 (H2BK120Ub) by the RNF20/40 complex gives a specific tag for epigenetic transcriptional activation and is also prerequisite for histone H3 'Lys-4' and 'Lys-79' methylation. It also functions cooperatively with the FACT dimer to stimulate elongation by RNA polymerase II. H2BK120Ub also acts as a regulator of mRNA splicing: deubiquitination by USP49 is required for efficient cotranscriptional splicing of a large set of exons. Phosphorylation at Ser-37 (H2BS36ph) by AMPK in response to stress promotes transcription. Phosphorylated on Ser-15 (H2BS14ph) by STK4/MST1 during apoptosis; which facilitates apoptotic chromatin condensation. Also phosphorylated on Ser-15 in response to DNA double strand breaks (DSBs), and in correlation with somatic hypermutation and immunoglobulin class-switch recombination. In terms of processing, glcNAcylation at Ser-113 promotes monoubiquitination of Lys-121. It fluctuates in response to extracellular glucose, and associates with transcribed genes. Post-translationally, ADP-ribosylated by PARP1 or PARP2 on Ser-7 (H2BS6ADPr) in response to DNA damage. H2BS6ADPr promotes recruitment of CHD1L. Mono-ADP-ribosylated on Glu-3 (H2BE2ADPr) by PARP3 in response to single-strand breaks. Poly ADP-ribosylation on Glu-36 (H2BE35ADPr) by PARP1 regulates adipogenesis: it inhibits phosphorylation at Ser-37 (H2BS36ph), thereby blocking expression of pro-adipogenetic genes. Crotonylation (Kcr) is specifically present in male germ cells and marks testis-specific genes in post-meiotic cells, including X-linked genes that escape sex chromosome inactivation in haploid cells. Crotonylation marks active promoters and enhancers and confers resistance to transcriptional repressors. It is also associated with post-meiotically activated genes on autosomes. In terms of processing, lactylated in macrophages by EP300/P300 by using lactoyl-CoA directly derived from endogenous or exogenous lactate, leading to stimulates gene transcription.

The protein localises to the nucleus. It is found in the chromosome. Its function is as follows. Core component of nucleosome. Nucleosomes wrap and compact DNA into chromatin, limiting DNA accessibility to the cellular machineries which require DNA as a template. Histones thereby play a central role in transcription regulation, DNA repair, DNA replication and chromosomal stability. DNA accessibility is regulated via a complex set of post-translational modifications of histones, also called histone code, and nucleosome remodeling. This chain is Histone H2B type 1-B, found in Homo sapiens (Human).